We begin with the raw amino-acid sequence, 128 residues long: Small ribosomal subunit protein bS6 (128 aa).

The protein belongs to the bacterial ribosomal protein bS6 family.

Binds together with bS18 to 16S ribosomal RNA. This Thermotoga petrophila (strain ATCC BAA-488 / DSM 13995 / JCM 10881 / RKU-1) protein is Small ribosomal subunit protein bS6.